The chain runs to 490 residues: Ketol-acid reductoisomerase (NADP(+)) (490 aa).

Residues 16–207 form the KARI N-terminal Rossmann domain; it reads INKCRFMKKE…GGHRAGVLES (192 aa). NADP(+) is bound by residues 44 to 47, K67, S77, and 107 to 109; these read CGAQ and DKQ. H131 is a catalytic residue. G157 contributes to the NADP(+) binding site. 2 KARI C-terminal knotted domains span residues 208–343 and 344–483; these read SFIA…TAPV and YNEK…MKKM. Residues D216, E220, E388, and E392 each coordinate Mg(2+). Residue S413 participates in substrate binding.

It belongs to the ketol-acid reductoisomerase family. The cofactor is Mg(2+).

It carries out the reaction (2R)-2,3-dihydroxy-3-methylbutanoate + NADP(+) = (2S)-2-acetolactate + NADPH + H(+). The catalysed reaction is (2R,3R)-2,3-dihydroxy-3-methylpentanoate + NADP(+) = (S)-2-ethyl-2-hydroxy-3-oxobutanoate + NADPH + H(+). It functions in the pathway amino-acid biosynthesis; L-isoleucine biosynthesis; L-isoleucine from 2-oxobutanoate: step 2/4. It participates in amino-acid biosynthesis; L-valine biosynthesis; L-valine from pyruvate: step 2/4. In terms of biological role, involved in the biosynthesis of branched-chain amino acids (BCAA). Catalyzes an alkyl-migration followed by a ketol-acid reduction of (S)-2-acetolactate (S2AL) to yield (R)-2,3-dihydroxy-isovalerate. In the isomerase reaction, S2AL is rearranged via a Mg-dependent methyl migration to produce 3-hydroxy-3-methyl-2-ketobutyrate (HMKB). In the reductase reaction, this 2-ketoacid undergoes a metal-dependent reduction by NADPH to yield (R)-2,3-dihydroxy-isovalerate. The chain is Ketol-acid reductoisomerase (NADP(+)) from Buchnera aphidicola subsp. Acyrthosiphon pisum (strain 5A).